Reading from the N-terminus, the 400-residue chain is GTPase Obg (400 aa).

The Obg domain maps to 1-159 (MRFVDEAVIT…REIRLELKVL (159 aa)). One can recognise an OBG-type G domain in the interval 160–333 (ADVGLLGMPN…VVYYLMDQIE (174 aa)). Residues 166–173 (GMPNAGKS), 191–195 (FTTMV), 213–216 (DIPG), 283–286 (NKLD), and 314–316 (SGL) contribute to the GTP site. Mg(2+) is bound by residues Ser-173 and Thr-193.

This sequence belongs to the TRAFAC class OBG-HflX-like GTPase superfamily. OBG GTPase family. As to quaternary structure, monomer. Mg(2+) serves as cofactor.

It is found in the cytoplasm. An essential GTPase which binds GTP, GDP and possibly (p)ppGpp with moderate affinity, with high nucleotide exchange rates and a fairly low GTP hydrolysis rate. Plays a role in control of the cell cycle, stress response, ribosome biogenesis and in those bacteria that undergo differentiation, in morphogenesis control. This Acinetobacter baylyi (strain ATCC 33305 / BD413 / ADP1) protein is GTPase Obg.